The following is a 227-amino-acid chain: Ornithine decarboxylase antizyme 1 (227 aa).

It belongs to the ODC antizyme family. In terms of assembly, interacts with ODC1 and thereby sterically blocks ODC homodimerization. Forms a ternary complex with PSMB4 and OAZ1 before PSMB4 is incorporated into the 20S proteasome. Interacts with AZIN2; this interaction disrupts the interaction between the antizyme and ODC1. Interacts with FAM171A1.

In terms of biological role, ornithine decarboxylase (ODC) antizyme protein that negatively regulates ODC activity and intracellular polyamine biosynthesis and uptake in response to increased intracellular polyamine levels. Binds to ODC monomers, inhibiting the assembly of the functional ODC homodimer, and targets the monomers for ubiquitin-independent proteolytic destruction by the 26S proteasome. Triggers ODC degradation by inducing the exposure of a cryptic proteasome-interacting surface of ODC. Stabilizes AZIN2 by interfering with its ubiquitination. Also inhibits cellular uptake of polyamines by inactivating the polyamine uptake transporter. SMAD1/OAZ1/PSMB4 complex mediates the degradation of the CREBBP/EP300 repressor SNIP1. Involved in the translocation of AZIN2 from ER-Golgi intermediate compartment (ERGIC) to the cytosol. The protein is Ornithine decarboxylase antizyme 1 (Oaz1) of Rattus norvegicus (Rat).